Consider the following 394-residue polypeptide: L-lactate dehydrogenase (394 aa).

One can recognise an FMN hydroxy acid dehydrogenase domain in the interval 1–380; sequence MIISAASDYR…SRDSLVQNAE (380 aa). Substrate is bound at residue Tyr24. Ser106 and Gln127 together coordinate FMN. Tyr129 lines the substrate pocket. Position 155 (Thr155) interacts with FMN. Arg164 is a substrate binding site. Lys251 contributes to the FMN binding site. The active-site Proton acceptor is His275. Position 278 (Arg278) interacts with substrate. 306–330 contributes to the FMN binding site; sequence DSGIRNGLDVVRMIALGADSVLLGR.

This sequence belongs to the FMN-dependent alpha-hydroxy acid dehydrogenase family. FMN serves as cofactor.

The protein resides in the cell inner membrane. The catalysed reaction is (S)-lactate + A = pyruvate + AH2. In terms of biological role, catalyzes the conversion of L-lactate to pyruvate. Is coupled to the respiratory chain. This Klebsiella pneumoniae (strain 342) protein is L-lactate dehydrogenase.